Here is a 326-residue protein sequence, read N- to C-terminus: Cytosolic Fe-S cluster assembly factor NBP35 (326 aa).

Residues 1 to 38 (MTEIANGQQILPPDYTLKEPEPEHCPGPESENAGKGDS) form a disordered region. Residues 16-26 (TLKEPEPEHCP) show a composition bias toward basic and acidic residues. [4Fe-4S] cluster is bound by residues cysteine 25, cysteine 39, cysteine 42, and cysteine 48. 78 to 85 (GKGGVGKS) serves as a coordination point for ATP. Residues cysteine 251 and cysteine 254 each coordinate [4Fe-4S] cluster.

It belongs to the Mrp/NBP35 ATP-binding proteins family. NUBP1/NBP35 subfamily. Heterotetramer of 2 NBP35 and 2 CFD1 chains. [4Fe-4S] cluster serves as cofactor.

Its subcellular location is the cytoplasm. It localises to the nucleus. Its function is as follows. Component of the cytosolic iron-sulfur (Fe/S) protein assembly (CIA) machinery. Required for maturation of extramitochondrial Fe-S proteins. The NBP35-CFD1 heterotetramer forms a Fe-S scaffold complex, mediating the de novo assembly of an Fe-S cluster and its transfer to target apoproteins. Required for biogenesis and export of both ribosomal subunits, which may reflect a role in assembly of the Fe/S clusters in RLI1, a protein which performs rRNA processing and ribosome export. This is Cytosolic Fe-S cluster assembly factor NBP35 from Kluyveromyces lactis (strain ATCC 8585 / CBS 2359 / DSM 70799 / NBRC 1267 / NRRL Y-1140 / WM37) (Yeast).